Here is a 254-residue protein sequence, read N- to C-terminus: Pyrroloquinoline-quinone synthase (254 aa).

Belongs to the PqqC family.

The catalysed reaction is 6-(2-amino-2-carboxyethyl)-7,8-dioxo-1,2,3,4,7,8-hexahydroquinoline-2,4-dicarboxylate + 3 O2 = pyrroloquinoline quinone + 2 H2O2 + 2 H2O + H(+). The protein operates within cofactor biosynthesis; pyrroloquinoline quinone biosynthesis. Functionally, ring cyclization and eight-electron oxidation of 3a-(2-amino-2-carboxyethyl)-4,5-dioxo-4,5,6,7,8,9-hexahydroquinoline-7,9-dicarboxylic-acid to PQQ. This Rhodopseudomonas palustris (strain ATCC BAA-98 / CGA009) protein is Pyrroloquinoline-quinone synthase.